Consider the following 325-residue polypeptide: Olfactory receptor 14L1 (325 aa).

The Extracellular segment spans residues 1-43; it reads MAQFNKNQLIACRRNGTTTSDFNQTEVAEFFLMGFSNSWDIQI. A helical membrane pass occupies residues 44–64; the sequence is VHAALFFLVYLAAVIGNLLII. The Cytoplasmic portion of the chain corresponds to 65 to 72; the sequence is ILTTLDVH. Residues 73–93 traverse the membrane as a helical segment; the sequence is LQTPMYFFLRNLSFLDFCYIS. The Extracellular portion of the chain corresponds to 94 to 117; the sequence is VTIPKSIVSSLTHDTSISFFGCAL. Residues 118–138 form a helical membrane-spanning segment; that stretch reads QAFFFMDLATTEVAILTVMSY. Residues 139-151 lie on the Cytoplasmic side of the membrane; it reads DRYMAICRPLHYE. Residues 152-172 form a helical membrane-spanning segment; sequence VIINQGVCLRMMAMSWLSGVI. At 173–214 the chain is on the extracellular side; it reads CGFMHVIATFSLPFCGRNRIRQFFCNIPQLLSLLDPKVITIE. The chain crosses the membrane as a helical span at residues 215–235; sequence IGVMVFGTSLVIISFVVITLS. At 236 to 255 the chain is on the cytoplasmic side; it reads YMYIFSVIMRIPSKEGRSKT. Residues 256–276 form a helical membrane-spanning segment; sequence FSTCIPHLVVVTLFMISGSIA. The Extracellular portion of the chain corresponds to 277-289; the sequence is YVKPISNSPPVLD. A helical membrane pass occupies residues 290–310; sequence VFLSAFYTVVPPTLNPVIYSL. The Cytoplasmic portion of the chain corresponds to 311–325; it reads RNRDMKAALRRQCGP.

It belongs to the G-protein coupled receptor 1 family.

It localises to the cell membrane. Its function is as follows. Odorant receptor. This Homo sapiens (Human) protein is Olfactory receptor 14L1.